The primary structure comprises 479 residues: Ribosomal RNA small subunit methyltransferase F (479 aa).

S-adenosyl-L-methionine-binding positions include 125-131, E149, D176, and D194; that span reads AAAPGSK. The Nucleophile role is filled by C247.

The protein belongs to the class I-like SAM-binding methyltransferase superfamily. RsmB/NOP family.

It is found in the cytoplasm. The catalysed reaction is cytidine(1407) in 16S rRNA + S-adenosyl-L-methionine = 5-methylcytidine(1407) in 16S rRNA + S-adenosyl-L-homocysteine + H(+). Specifically methylates the cytosine at position 1407 (m5C1407) of 16S rRNA. This is Ribosomal RNA small subunit methyltransferase F from Salmonella paratyphi B (strain ATCC BAA-1250 / SPB7).